A 143-amino-acid chain; its full sequence is Transcriptional regulator MraZ (143 aa).

2 SpoVT-AbrB domains span residues 5–47 and 76–119; these read EYQH…PQDE and ATEC…SKER.

This sequence belongs to the MraZ family. In terms of assembly, forms oligomers.

The protein resides in the cytoplasm. The protein localises to the nucleoid. This Brevibacillus brevis (strain 47 / JCM 6285 / NBRC 100599) protein is Transcriptional regulator MraZ.